Reading from the N-terminus, the 432-residue chain is Enolase (432 aa).

Glutamine 168 contacts (2R)-2-phosphoglycerate. The Proton donor role is filled by glutamate 210. Aspartate 247, glutamate 288, and aspartate 315 together coordinate Mg(2+). (2R)-2-phosphoglycerate is bound by residues lysine 340, arginine 369, serine 370, and lysine 391. Lysine 340 acts as the Proton acceptor in catalysis.

The protein belongs to the enolase family. Mg(2+) is required as a cofactor.

The protein localises to the cytoplasm. Its subcellular location is the secreted. It localises to the cell surface. It catalyses the reaction (2R)-2-phosphoglycerate = phosphoenolpyruvate + H2O. Its pathway is carbohydrate degradation; glycolysis; pyruvate from D-glyceraldehyde 3-phosphate: step 4/5. Catalyzes the reversible conversion of 2-phosphoglycerate (2-PG) into phosphoenolpyruvate (PEP). It is essential for the degradation of carbohydrates via glycolysis. This is Enolase from Microcystis aeruginosa (strain NIES-843 / IAM M-2473).